Here is a 502-residue protein sequence, read N- to C-terminus: Acetyl-coenzyme A carboxylase carboxyl transferase subunit beta, chloroplastic (502 aa).

Residues 191–202 (GSDSESSSIRTS) are compositionally biased toward low complexity. The tract at residues 191–212 (GSDSESSSIRTSGNDSNFNVRE) is disordered. In terms of domain architecture, CoA carboxyltransferase N-terminal spans 226-497 (LWVQCENCYE…NQNSSGARGS (272 aa)). Residues Cys230, Cys233, Cys249, and Cys252 each coordinate Zn(2+). A C4-type zinc finger spans residues 230–252 (CENCYELNYRSFFRSKMNICEQC).

This sequence belongs to the AccD/PCCB family. In terms of assembly, acetyl-CoA carboxylase is a heterohexamer composed of biotin carboxyl carrier protein, biotin carboxylase and 2 subunits each of ACCase subunit alpha and ACCase plastid-coded subunit beta (accD). The cofactor is Zn(2+).

It is found in the plastid. Its subcellular location is the chloroplast stroma. The enzyme catalyses N(6)-carboxybiotinyl-L-lysyl-[protein] + acetyl-CoA = N(6)-biotinyl-L-lysyl-[protein] + malonyl-CoA. The protein operates within lipid metabolism; malonyl-CoA biosynthesis; malonyl-CoA from acetyl-CoA: step 1/1. Its function is as follows. Component of the acetyl coenzyme A carboxylase (ACC) complex. Biotin carboxylase (BC) catalyzes the carboxylation of biotin on its carrier protein (BCCP) and then the CO(2) group is transferred by the transcarboxylase to acetyl-CoA to form malonyl-CoA. The chain is Acetyl-coenzyme A carboxylase carboxyl transferase subunit beta, chloroplastic from Chloranthus spicatus (Chulantree).